Reading from the N-terminus, the 501-residue chain is Pre-mRNA-splicing factor 38B (501 aa).

Residues 1–11 (MAGSQQQQQQQ) are compositionally biased toward low complexity. 2 disordered regions span residues 1 to 28 (MAGSQQQQQQQAVSKPTGGKHGNNLPLW) and 208 to 501 (DQHM…ADSP). Positions 243–273 (GDKRRSRTPRRSPSPRKSQNRSRSRSHHRER) are enriched in basic residues. A coiled-coil region spans residues 281–302 (ELERERDRQRKEREGKDRDRDR). Over residues 281–328 (ELERERDRQRKEREGKDRDRDRDRDRERDRERDRDRRRSRTPDRNAER) the composition is skewed to basic and acidic residues. Residues 329 to 341 (RRSRSRERRRSRS) show a composition bias toward basic residues. The segment covering 342–408 (TSRDKRTERK…EEKKHREEKR (67 aa)) has biased composition (basic and acidic residues). The segment covering 409 to 435 (SKRSRSRSRDRKHKAERSSKKRSRSGS) has biased composition (basic residues). Over residues 437–447 (SRQEAGEEKNR) the composition is skewed to basic and acidic residues. Residues 448 to 468 (KRERSHSKDRQHKRSRSKERS) show a composition bias toward basic residues. A compositionally biased stretch (basic and acidic residues) spans 469-491 (HRRESSNERIHARQERPSSESGE). Residues 492–501 (RTNSVRADSP) show a composition bias toward polar residues.

This sequence belongs to the PRP38 family.

The protein resides in the nucleus. Functionally, may be required for pre-mRNA splicing. The protein is Pre-mRNA-splicing factor 38B (prpf38b) of Danio rerio (Zebrafish).